Consider the following 271-residue polypeptide: Aquaporin-2 (271 aa).

Residues 1 to 11 (MWELRSIAFSR) lie on the Cytoplasmic side of the membrane. The chain crosses the membrane as a helical span at residues 12-32 (AVLAEFLATLLFVFFGLGSAL). The Extracellular segment spans residues 33-40 (NWPQALPS). The helical transmembrane segment at 41–59 (VLQIAMAFGLAIGTLVQAL) threads the bilayer. Over 60–64 (GHVSG) the chain is Cytoplasmic. The discontinuously helical intramembrane region spans 65-74 (AHINPAVTVA). Positions 68–70 (NPA) match the NPA 1 motif. The Cytoplasmic segment spans residues 75–85 (CLVGCHVSFLR). Residues 86 to 107 (AVFYVAAQLLGAVAGAALLHEI) form a helical membrane-spanning segment. Residues 108–127 (TPPAIRGDLAVNALNNNSTA) lie on the Extracellular side of the membrane. 2 N-linked (GlcNAc...) asparagine glycosylation sites follow: Asn-123 and Asn-124. The chain crosses the membrane as a helical span at residues 128-148 (GQAVTVELFLTLQLVLCIFPS). Over 149–156 (TDKRRGKQ) the chain is Cytoplasmic. A helical membrane pass occupies residues 157-176 (LGHPALSIGFSVALGHLLGI). Over 177–180 (HYTG) the chain is Extracellular. The discontinuously helical intramembrane region spans 181-193 (CSMNPARSLAPAI). The NPA 2 motif lies at 184–186 (NPA). Topologically, residues 194–201 (VTGKFDDH) are extracellular. A helical transmembrane segment spans residues 202–222 (WVFWIGPLVGAIVASLLYNYV). The Cytoplasmic portion of the chain corresponds to 223–271 (LFPPAKSLSERLAVLKGLEPDTDWEEREVRRRQSVELHSPQSLPRGTKA). The segment at 249–271 (REVRRRQSVELHSPQSLPRGTKA) is disordered. Ser-256 is modified (phosphoserine). Residues 261–271 (SPQSLPRGTKA) are compositionally biased toward polar residues.

Belongs to the MIP/aquaporin (TC 1.A.8) family. In terms of assembly, homotetramer. Ser-256 phosphorylation is necessary and sufficient for expression at the apical membrane. Endocytosis is not phosphorylation-dependent. Post-translationally, N-glycosylated. Expressed in renal collecting tubules.

Its subcellular location is the apical cell membrane. The protein resides in the basolateral cell membrane. It is found in the cell membrane. The protein localises to the cytoplasmic vesicle membrane. It localises to the golgi apparatus. Its subcellular location is the trans-Golgi network membrane. It catalyses the reaction H2O(in) = H2O(out). The enzyme catalyses glycerol(in) = glycerol(out). Forms a water-specific channel that provides the plasma membranes of renal collecting duct with high permeability to water, thereby permitting water to move in the direction of an osmotic gradient. Could also be permeable to glycerol. This is Aquaporin-2 from Ovis aries (Sheep).